The primary structure comprises 275 residues: Nuclear egress protein 2 (275 aa).

The Perinuclear space portion of the chain corresponds to 1 to 251 (MDSYNYRDFA…SERVKRRPVR (251 aa)). Positions 197–221 (CDRSNGIVSPREHRECRERQKRRPT) are disordered. The chain crosses the membrane as a helical span at residues 252–272 (IAAAILAFVFVAVILAIATKG). Over 273-275 (RLF) the chain is Nuclear.

This sequence belongs to the herpesviridae NEC2 protein family. As to quaternary structure, forms a heterohexameric complex with NEC1. Post-translationally, phosphorylated.

It is found in the host nucleus inner membrane. Plays an essential role in virion nuclear egress, the first step of virion release from infected cell. Within the host nucleus, NEC1 interacts with the newly formed capsid through the vertexes and directs it to the inner nuclear membrane by associating with NEC2. Induces the budding of the capsid at the inner nuclear membrane as well as its envelopment into the perinuclear space. There, the NEC1/NEC2 complex promotes the fusion of the enveloped capsid with the outer nuclear membrane and the subsequent release of the viral capsid into the cytoplasm where it will reach the secondary budding sites in the host Golgi or trans-Golgi network. In Equus caballus (Horse), this protein is Nuclear egress protein 2.